Reading from the N-terminus, the 231-residue chain is Large ribosomal subunit protein uL1 (231 aa).

This sequence belongs to the universal ribosomal protein uL1 family. As to quaternary structure, part of the 50S ribosomal subunit.

Binds directly to 23S rRNA. The L1 stalk is quite mobile in the ribosome, and is involved in E site tRNA release. Functionally, protein L1 is also a translational repressor protein, it controls the translation of the L11 operon by binding to its mRNA. The sequence is that of Large ribosomal subunit protein uL1 from Francisella philomiragia subsp. philomiragia (strain ATCC 25017 / CCUG 19701 / FSC 153 / O#319-036).